The chain runs to 100 residues: Large ribosomal subunit protein uL23 (100 aa).

This sequence belongs to the universal ribosomal protein uL23 family. Part of the 50S ribosomal subunit. Contacts protein L29, and trigger factor when it is bound to the ribosome.

One of the early assembly proteins it binds 23S rRNA. One of the proteins that surrounds the polypeptide exit tunnel on the outside of the ribosome. Forms the main docking site for trigger factor binding to the ribosome. This chain is Large ribosomal subunit protein uL23, found in Salmonella paratyphi A (strain ATCC 9150 / SARB42).